We begin with the raw amino-acid sequence, 397 residues long: DnaJ homolog subfamily A member 1 (397 aa).

The 63-residue stretch at 6–68 folds into the J domain; it reads TYYDVLGVKP…KKRELYDKGG (63 aa). Lys66 carries the N6-acetyllysine modification. Position 83 is a phosphoserine (Ser83). The CR-type zinc-finger motif lies at 121–205; it reads GATRKLALQK…CNGRKIVREK (85 aa). Zn(2+)-binding residues include Cys134, Cys137, Cys150, Cys153, Cys177, Cys180, Cys193, and Cys196. CXXCXGXG motif repeat units lie at residues 134–141, 150–157, 177–184, and 193–200; these read CDKCEGRG, CPNCRGTG, CMECQGHG, and CKSCNGRK. Position 335 is a phosphoserine (Ser335). Residues 352 to 397 form a disordered region; it reads VEETDEMDQVELVDFDPNQERRRHYNGEAYEDDEHHPRGGVQCQTS. The segment covering 353–365 has biased composition (acidic residues); it reads EETDEMDQVELVD. The residue at position 381 (Tyr381) is a Phosphotyrosine. Cys394 carries the cysteine methyl ester modification. The S-farnesyl cysteine moiety is linked to residue Cys394. The propeptide at 395–397 is removed in mature form; the sequence is QTS.

As to quaternary structure, identified in a complex with HSPA1B and BAX. Interacts with RNF207.

The protein resides in the membrane. It localises to the cytoplasm. Its subcellular location is the microsome. The protein localises to the mitochondrion. It is found in the nucleus. The protein resides in the perinuclear region. Functionally, co-chaperone for HSPA8/Hsc70. Plays a role in protein transport into mitochondria via its role as co-chaperone. Stimulates ATP hydrolysis, but not the folding of unfolded proteins mediated by HSPA1A (in vitro). Promotes apoptosis in response to cellular stress mediated by exposure to anisomycin or UV. Functions as co-chaperone for HSPA1B and negatively regulates the translocation of BAX from the cytosol to mitochondria in response to cellular stress, thereby protecting cells against apoptosis. This chain is DnaJ homolog subfamily A member 1 (Dnaja1), found in Mus musculus (Mouse).